The sequence spans 592 residues: Transcription factor MYC3 (592 aa).

The JAZ-interaction domain stretch occupies residues 82 to 141; sequence STGDNTVILGWGDGYYKGEEDKEKKKNNTNTAEQEHRKRVIRELNSLISGGIGVSDESND. 4 disordered regions span residues 261–313, 341–361, 393–422, and 465–508; these read ENDP…VENQ, CGNESSKKRTSVSKGSNNDEG, EPPEKKPRKRGRKPANGREEPLNHVEAERQ, and QQAE…STAS. Residues 278 to 293 are compositionally biased toward low complexity; it reads SPARVNNGNNSNSNSK. Basic and acidic residues predominate over residues 294-306; that stretch reads SDSHQISKLEKND. The segment covering 352–361 has biased composition (polar residues); it reads VSKGSNNDEG. The span at 398-407 shows a compositional bias: basic residues; the sequence is KPRKRGRKPA. Composition is skewed to basic and acidic residues over residues 408 to 422 and 468 to 482; these read NGREEPLNHVEAERQ and ESDKEEIQKKLDGMS. Positions 411–460 constitute a bHLH domain; sequence EEPLNHVEAERQRREKLNQRFYSLRAVVPNVSKMDKASLLGDAISYINEL.

As to quaternary structure, homo- and heterodimer. Interacts with MYB28, MYB29, MYB34, MYB51, MYB76, MYB122, MYC2, MYC4, AFPH2/NINJA and the JAZ repressors TIFY10A/JAZ1, TIFY10B/JAZ2, TIFY6B/JAZ3, TIFY11A/JAZ5, TIFY11B/JAZ6, TIFY5B/JAZ7, TIFY5A/JAZ8, TIFY7/JAZ9, TIFY9/JAZ10, TIFY3A/JAZ11 and TIFY3B/JAZ12. As to expression, constitutively expressed in roots, stems, leaves, flowers, and seedlings.

It is found in the nucleus. Functionally, transcription factor involved in tryptophan, jasmonic acid (JA) and other stress-responsive gene regulation. With MYC2 and MYC4, controls additively subsets of JA-dependent responses. Can form complexes with all known glucosinolate-related MYBs to regulate glucosinolate biosynthesis. Binds to the G-box (5'-CACGTG-3') of promoters. Activates multiple TIFY/JAZ promoters. In Arabidopsis thaliana (Mouse-ear cress), this protein is Transcription factor MYC3 (MYC3).